The primary structure comprises 398 residues: Nocardicin C N-oxygenase (398 aa).

The disordered stretch occupies residues 63 to 90 (RARAAGREETPRVTPEAAPAGSMLSMDP). Residues histidine 93, arginine 97, arginine 289, histidine 345, and cysteine 347 each contribute to the heme site.

It belongs to the cytochrome P450 family. Requires heme as cofactor.

It catalyses the reaction nocardicin C + 4 reduced [2Fe-2S]-[ferredoxin] + 2 O2 + 2 H(+) = nocardicin A + 4 oxidized [2Fe-2S]-[ferredoxin] + 3 H2O. Its pathway is antibiotic biosynthesis. Functionally, involved in the biosynthesis of the beta-lactam antibiotic nocardicin A. Catalyzes the conversion of nocardicin C to nocardicin A. Cannot use nocardicin G. In Nocardia uniformis subsp. tsuyamanensis, this protein is Nocardicin C N-oxygenase.